The chain runs to 69 residues: uncharacterized protein (69 aa).

This is an uncharacterized protein from Vaccinia virus (strain Western Reserve) (VACV).